The chain runs to 197 residues: Putative AgrB-like protein (197 aa).

4 helical membrane-spanning segments follow: residues 29 to 49 (FGFT…AVGL), 79 to 99 (SIGC…VPFA), 102 to 122 (YAWI…APYY), and 143 to 163 (ILIV…LVLG).

The protein belongs to the AgrB family.

Its subcellular location is the cell membrane. May be involved in the proteolytic processing of a quorum sensing system signal molecule precursor. This chain is Putative AgrB-like protein, found in Halalkalibacterium halodurans (strain ATCC BAA-125 / DSM 18197 / FERM 7344 / JCM 9153 / C-125) (Bacillus halodurans).